The sequence spans 647 residues: Acetyl-coenzyme A synthetase (647 aa).

Residues 190 to 193 (RGGR) and T310 contribute to the CoA site. Residues 386-388 (GEP), 410-415 (DTWWQT), D499, and R514 each bind ATP. S522 is a binding site for CoA. Position 525 (R525) interacts with ATP. Residues V536, H538, and V541 each coordinate Mg(2+). R583 is a CoA binding site. At K608 the chain carries N6-acetyllysine.

The protein belongs to the ATP-dependent AMP-binding enzyme family. It depends on Mg(2+) as a cofactor. Acetylated. Deacetylation by the SIR2-homolog deacetylase activates the enzyme.

The catalysed reaction is acetate + ATP + CoA = acetyl-CoA + AMP + diphosphate. Functionally, catalyzes the conversion of acetate into acetyl-CoA (AcCoA), an essential intermediate at the junction of anabolic and catabolic pathways. AcsA undergoes a two-step reaction. In the first half reaction, AcsA combines acetate with ATP to form acetyl-adenylate (AcAMP) intermediate. In the second half reaction, it can then transfer the acetyl group from AcAMP to the sulfhydryl group of CoA, forming the product AcCoA. This Xylella fastidiosa (strain Temecula1 / ATCC 700964) protein is Acetyl-coenzyme A synthetase.